Reading from the N-terminus, the 346-residue chain is Sesquiterpene synthase Agr1 (346 aa).

4 residues coordinate Mg(2+): Asp-98, Asn-234, Ser-238, and Glu-242. The DDXXD motif motif lies at Asp-98–Asp-102. The (2E,6E)-farnesyl diphosphate site is built by Arg-322 and Tyr-323.

The protein belongs to the terpene synthase family. Requires Mg(2+) as cofactor.

The catalysed reaction is (2E,6E)-farnesyl diphosphate = delta-cadinene + diphosphate. It carries out the reaction (2E,6E)-farnesyl diphosphate = alpha-muurolene + diphosphate. It catalyses the reaction (2E,6E)-farnesyl diphosphate = gamma-muurolene + diphosphate. The enzyme catalyses (2E,6E)-farnesyl diphosphate = alpha-selinene + diphosphate. Functionally, terpene cyclase that catalyzes the cyclization of farnesyl diphosphate (FPP) to various sesquiterpenes, including alpha-muurolene, gamma-muurolene, alpha-selinene, beta-selinene, delta-cadinene, alpha-cadinol and delta-cadinol. Delta-cadinene is the major product of Agr1. This chain is Sesquiterpene synthase Agr1, found in Cyclocybe aegerita (Black poplar mushroom).